A 605-amino-acid polypeptide reads, in one-letter code: UvrABC system protein C (605 aa).

Positions 14-92 (QSCGVYKMVG…IKSLKPLYNI (79 aa)) constitute a GIY-YIG domain. The UVR domain occupies 202–237 (KEVKEQLLFTMRKCSSEENYELAAIYRDRVKFLEQI).

The protein belongs to the UvrC family. Interacts with UvrB in an incision complex.

The protein resides in the cytoplasm. In terms of biological role, the UvrABC repair system catalyzes the recognition and processing of DNA lesions. UvrC both incises the 5' and 3' sides of the lesion. The N-terminal half is responsible for the 3' incision and the C-terminal half is responsible for the 5' incision. In Wolbachia sp. subsp. Drosophila simulans (strain wRi), this protein is UvrABC system protein C.